The following is a 219-amino-acid chain: Resolvase (219 aa).

The Resolvase/invertase-type recombinase catalytic domain occupies 15–159 (VARIYLRAST…EDRRERQRQG (145 aa)). Catalysis depends on Ser23, which acts as the O-(5'-phospho-DNA)-serine intermediate.

This sequence belongs to the site-specific recombinase resolvase family.

Its function is as follows. Involved in plasmid partition. This chain is Resolvase (parA), found in Escherichia coli.